The following is a 282-amino-acid chain: MGVPLILRKTDFFANAGQAVAVADRYPQNVFAEHTHEFCELVLVWRGNGLHVLNDRPYRITRGDLFYIRAEDKHSYASVNDLVLQNVIYCPDRLKLNVDWASNIPGFNDARGAPHWRLSSNGMGQVRPVITQLEQESLKADQSANEMAELLFAQLVMTLKRFRYATDNPSANEQEALLDKLITALAGSLNRSFVLEKFCEQEQCSERALRQQFRTQTGMTVNHYLRQLRICHAQYLLQHTELMVSEVAMRCGFEDSNYFSVVFNREVGMTPVQWRHRSRKAA.

The region spanning 179 to 277 (DKLITALAGS…GMTPVQWRHR (99 aa)) is the HTH araC/xylS-type domain. DNA-binding regions (H-T-H motif) lie at residues 196–217 (EKFC…RTQT) and 244–267 (VSEV…NREV).

As to quaternary structure, binds DNA as a dimer.

Its subcellular location is the cytoplasm. Functionally, activates expression of the rhaSR operon in response to L-rhamnose. This chain is HTH-type transcriptional activator RhaR, found in Enterobacter sp. (strain 638).